The following is a 184-amino-acid chain: Ras-related protein Rap1 (184 aa).

Glycine 10–serine 17 is a GTP binding site. Residues tyrosine 32–tyrosine 40 carry the Effector region motif. Residues aspartate 57–threonine 61 and asparagine 116–aspartate 119 contribute to the GTP site. Position 181 is a cysteine methyl ester (cysteine 181). Cysteine 181 is lipidated: S-geranylgeranyl cysteine. Positions valine 182–leucine 184 are cleaved as a propeptide — removed in mature form.

This sequence belongs to the small GTPase superfamily. Ras family.

It is found in the cell membrane. It catalyses the reaction GTP + H2O = GDP + phosphate + H(+). Its activity is regulated as follows. Alternates between an inactive form bound to GDP and an active form bound to GTP. Activated by a guanine nucleotide-exchange factor (GEF) and inactivated by a GTPase-activating protein (GAP). Functionally, ras proteins bind GDP/GTP and possess intrinsic GTPase activity. Plays a role in photoreceptor cell determination. This Drosophila melanogaster (Fruit fly) protein is Ras-related protein Rap1.